The sequence spans 164 residues: C-phycoerythrin class 1 subunit alpha (164 aa).

(2R,3E)-phycoerythrobilin-binding residues include Cys-82 and Cys-139.

This sequence belongs to the phycobiliprotein family. In terms of assembly, heterodimer of an alpha and a beta chain. In terms of processing, contains one covalently linked bilin chromophore.

The protein resides in the cellular thylakoid membrane. Functionally, light-harvesting photosynthetic bile pigment-protein from the phycobiliprotein complex. This Synechococcus sp. (strain WH7803) protein is C-phycoerythrin class 1 subunit alpha (cpeA).